Reading from the N-terminus, the 370-residue chain is Putative agmatine deiminase (370 aa).

C361 acts as the Amidino-cysteine intermediate in catalysis.

The protein belongs to the agmatine deiminase family.

It carries out the reaction agmatine + H2O = N-carbamoylputrescine + NH4(+). The polypeptide is Putative agmatine deiminase (Shewanella sp. (strain MR-7)).